Consider the following 125-residue polypeptide: Small ribosomal subunit protein uS13 (125 aa).

This sequence belongs to the universal ribosomal protein uS13 family. As to quaternary structure, part of the 30S ribosomal subunit. Forms a loose heterodimer with protein S19. Forms two bridges to the 50S subunit in the 70S ribosome.

Functionally, located at the top of the head of the 30S subunit, it contacts several helices of the 16S rRNA. In the 70S ribosome it contacts the 23S rRNA (bridge B1a) and protein L5 of the 50S subunit (bridge B1b), connecting the 2 subunits; these bridges are implicated in subunit movement. Contacts the tRNAs in the A and P-sites. This Gluconacetobacter diazotrophicus (strain ATCC 49037 / DSM 5601 / CCUG 37298 / CIP 103539 / LMG 7603 / PAl5) protein is Small ribosomal subunit protein uS13.